The sequence spans 157 residues: Crossover junction endodeoxyribonuclease RuvC (157 aa).

Residues D7, E67, and D140 contribute to the active site. Residues D7, E67, and D140 each coordinate Mg(2+).

It belongs to the RuvC family. As to quaternary structure, homodimer which binds Holliday junction (HJ) DNA. The HJ becomes 2-fold symmetrical on binding to RuvC with unstacked arms; it has a different conformation from HJ DNA in complex with RuvA. In the full resolvosome a probable DNA-RuvA(4)-RuvB(12)-RuvC(2) complex forms which resolves the HJ. The cofactor is Mg(2+).

It is found in the cytoplasm. It catalyses the reaction Endonucleolytic cleavage at a junction such as a reciprocal single-stranded crossover between two homologous DNA duplexes (Holliday junction).. In terms of biological role, the RuvA-RuvB-RuvC complex processes Holliday junction (HJ) DNA during genetic recombination and DNA repair. Endonuclease that resolves HJ intermediates. Cleaves cruciform DNA by making single-stranded nicks across the HJ at symmetrical positions within the homologous arms, yielding a 5'-phosphate and a 3'-hydroxyl group; requires a central core of homology in the junction. The consensus cleavage sequence is 5'-(A/T)TT(C/G)-3'. Cleavage occurs on the 3'-side of the TT dinucleotide at the point of strand exchange. HJ branch migration catalyzed by RuvA-RuvB allows RuvC to scan DNA until it finds its consensus sequence, where it cleaves and resolves the cruciform DNA. The protein is Crossover junction endodeoxyribonuclease RuvC of Rickettsia akari (strain Hartford).